The primary structure comprises 65 residues: Large ribosomal subunit protein bL35 (65 aa).

Belongs to the bacterial ribosomal protein bL35 family.

The protein is Large ribosomal subunit protein bL35 of Heliobacterium modesticaldum (strain ATCC 51547 / Ice1).